Consider the following 869-residue polypeptide: Facilitated trehalose transporter Tret1 (869 aa).

Disordered stretches follow at residues 1–214 and 258–315; these read MSGR…QKAT and KESS…LIHR. Residues 1–404 lie on the Cytoplasmic side of the membrane; sequence MSGRDNRGAG…VYRPTTNPIY (404 aa). Basic and acidic residues predominate over residues 25–43; it reads KLKEKLTRAGDDQGYHRVE. Low complexity-rich tracts occupy residues 44 to 57, 79 to 92, and 118 to 127; these read SNLS…SLDT, PQQQ…QQLR, and PFQQQQQRTP. Basic and acidic residues-rich tracts occupy residues 147–156 and 258–291; these read EIREHRDRQQ and KESS…KLDK. Residues Ser-260, Ser-261, Ser-262, Ser-332, and Ser-334 each carry the phosphoserine modification. The interval 336–368 is disordered; it reads EDFHTSRQHFQQQRSISTDSRKSRRPYEMDEMG. Over residues 343–353 the composition is skewed to polar residues; that stretch reads QHFQQQRSIST. The span at 354-368 shows a compositional bias: basic and acidic residues; that stretch reads DSRKSRRPYEMDEMG. Residues 405 to 425 traverse the membrane as a helical segment; that stretch reads IWTQVLAALSVSLGSLVVGFV. Residues 426-452 lie on the Extracellular side of the membrane; that stretch reads SAYTSPALVSMTNRNMTSFEVTPQAAS. Asn-440 carries N-linked (GlcNAc...) asparagine glycosylation. A helical transmembrane segment spans residues 453–473; it reads WVGGIMPLAGLAGGIAGGPFI. Topologically, residues 474-485 are cytoplasmic; sequence EYLGRRNTILAT. The chain crosses the membrane as a helical span at residues 486–506; the sequence is AIPFIVSSLLIACAVNVAMVL. The Extracellular segment spans residues 507–509; that stretch reads AGR. A helical transmembrane segment spans residues 510-530; sequence FLAGFCVGIASLSLPVYLGET. Over 531 to 536 the chain is Cytoplasmic; it reads VQPEVR. A helical membrane pass occupies residues 537–557; that stretch reads GTLGLLPTAFGNIGILLCFVA. Topologically, residues 558 to 564 are extracellular; that stretch reads GTYMDWS. The chain crosses the membrane as a helical span at residues 565 to 585; that stretch reads MLAFLGAALPVPFLILMFLIP. Over 586–654 the chain is Cytoplasmic; the sequence is ETPRWFVSRG…NLKPLSISLG (69 aa). The helical transmembrane segment at 655 to 675 threads the bilayer; the sequence is LMFFQQLSGINAVIFYTVSIF. Residues 676 to 685 are Extracellular-facing; that stretch reads KDAGSTIDGN. Residues 686–706 form a helical membrane-spanning segment; it reads LCTIIVGIVNFMATFIATLLI. Over 707-712 the chain is Cytoplasmic; the sequence is DRAGRK. A helical transmembrane segment spans residues 713–733; the sequence is ILLYVSNIAMIITLFVLGGFF. The Extracellular segment spans residues 734–752; the sequence is YCKSHGQDVSQLGWLPLSC. The helical transmembrane segment at 753–773 threads the bilayer; sequence FVIYILGFSLGFGPIPWLMMG. The Cytoplasmic segment spans residues 774-779; that stretch reads EILPSK. A helical transmembrane segment spans residues 780-800; the sequence is IRGSAASVATAFNWSCTFVVT. Residues 801 to 813 lie on the Extracellular side of the membrane; the sequence is KTFQDMIDFMGAH. The chain crosses the membrane as a helical span at residues 814–834; the sequence is GAFWLFGSICFIGLFFVILYV. The Cytoplasmic portion of the chain corresponds to 835–869; it reads PETQGKTLEDIERKMMGRVRRMSSVANMKPLAFNM. A phosphoserine mark is found at Ser-857 and Ser-858.

The protein belongs to the major facilitator superfamily. Sugar transporter (TC 2.A.1.1) family. Trehalose transporter subfamily.

It is found in the cell membrane. Low-capacity facilitative transporter for trehalose. Does not transport maltose, sucrose or lactose. Mediates the bidirectional transfer of trehalose. Responsible for the transport of trehalose synthesized in the fat body and the incorporation of trehalose into other tissues that require a carbon source, thereby regulating trehalose levels in the hemolymph. In Drosophila persimilis (Fruit fly), this protein is Facilitated trehalose transporter Tret1.